The chain runs to 76 residues: MGGLSIWHWLIVLLIVALVFGTKKLRNIGNDLGSAVKGFKDGMKDGDAPADAQQLPRSGTVDVNAKEATRSDSNKA.

Residues 1-21 (MGGLSIWHWLIVLLIVALVFG) form a helical membrane-spanning segment. The tract at residues 43-76 (MKDGDAPADAQQLPRSGTVDVNAKEATRSDSNKA) is disordered. Residues 64–76 (NAKEATRSDSNKA) show a composition bias toward basic and acidic residues.

The protein belongs to the TatA/E family. As to quaternary structure, the Tat system comprises two distinct complexes: a TatABC complex, containing multiple copies of TatA, TatB and TatC subunits, and a separate TatA complex, containing only TatA subunits. Substrates initially bind to the TatABC complex, which probably triggers association of the separate TatA complex to form the active translocon.

It localises to the cell inner membrane. Its function is as follows. Part of the twin-arginine translocation (Tat) system that transports large folded proteins containing a characteristic twin-arginine motif in their signal peptide across membranes. TatA could form the protein-conducting channel of the Tat system. This chain is Sec-independent protein translocase protein TatA, found in Burkholderia multivorans (strain ATCC 17616 / 249).